The sequence spans 328 residues: Lactamase-like protein nscB (328 aa).

Zn(2+)-binding residues include histidine 97, histidine 99, aspartate 101, and histidine 102. Aspartate 101 functions as the Proton donor/acceptor in the catalytic mechanism.

Belongs to the metallo-beta-lactamase superfamily. Zn(2+) serves as cofactor.

The protein operates within secondary metabolite biosynthesis. Its function is as follows. Lactamase-like protein; part of the gene cluster that mediates the biosynthesis of neosartoricin, a prenylated anthracenone that exhibits T-cell antiproliferative activity, suggestive of a physiological role as an immunosuppressive agent. The non-reducing polyketide synthase nscA probably synthesizes and cyclizes the decaketide backbone. The hydrolase nscB then mediates the product release through hydrolysis followed by spontaneous decarboxylation. The prenyltransferase nscD catalyzes the addition of the dimethylallyl group to the aromatic C5. The FAD-dependent monooxygenase nscC is then responsible for the stereospecific hydroxylation at C2. There is no gene encoding O-acetyltransferase in the nsc gene cluster; thus, the last step of 2-O-acetylation leading to neosartoricin may be catalyzed by an unidentified O-acetyltransferase. The protein is Lactamase-like protein nscB of Neosartorya fischeri (strain ATCC 1020 / DSM 3700 / CBS 544.65 / FGSC A1164 / JCM 1740 / NRRL 181 / WB 181) (Aspergillus fischerianus).